Reading from the N-terminus, the 308-residue chain is 4-hydroxy-3-methylbut-2-enyl diphosphate reductase (308 aa).

Position 13 (Cys-13) interacts with [4Fe-4S] cluster. The (2E)-4-hydroxy-3-methylbut-2-enyl diphosphate site is built by His-42 and His-75. His-42 and His-75 together coordinate dimethylallyl diphosphate. Isopentenyl diphosphate-binding residues include His-42 and His-75. Cys-97 contributes to the [4Fe-4S] cluster binding site. His-125 lines the (2E)-4-hydroxy-3-methylbut-2-enyl diphosphate pocket. His-125 contacts dimethylallyl diphosphate. Position 125 (His-125) interacts with isopentenyl diphosphate. The Proton donor role is filled by Glu-127. Thr-165 contacts (2E)-4-hydroxy-3-methylbut-2-enyl diphosphate. Cys-195 is a [4Fe-4S] cluster binding site. Positions 223, 224, 225, and 267 each coordinate (2E)-4-hydroxy-3-methylbut-2-enyl diphosphate. Positions 223, 224, 225, and 267 each coordinate dimethylallyl diphosphate. Residues Ser-223, Ser-224, Asn-225, and Ser-267 each coordinate isopentenyl diphosphate.

This sequence belongs to the IspH family. It depends on [4Fe-4S] cluster as a cofactor.

The enzyme catalyses isopentenyl diphosphate + 2 oxidized [2Fe-2S]-[ferredoxin] + H2O = (2E)-4-hydroxy-3-methylbut-2-enyl diphosphate + 2 reduced [2Fe-2S]-[ferredoxin] + 2 H(+). It carries out the reaction dimethylallyl diphosphate + 2 oxidized [2Fe-2S]-[ferredoxin] + H2O = (2E)-4-hydroxy-3-methylbut-2-enyl diphosphate + 2 reduced [2Fe-2S]-[ferredoxin] + 2 H(+). It functions in the pathway isoprenoid biosynthesis; dimethylallyl diphosphate biosynthesis; dimethylallyl diphosphate from (2E)-4-hydroxy-3-methylbutenyl diphosphate: step 1/1. The protein operates within isoprenoid biosynthesis; isopentenyl diphosphate biosynthesis via DXP pathway; isopentenyl diphosphate from 1-deoxy-D-xylulose 5-phosphate: step 6/6. Its function is as follows. Catalyzes the conversion of 1-hydroxy-2-methyl-2-(E)-butenyl 4-diphosphate (HMBPP) into a mixture of isopentenyl diphosphate (IPP) and dimethylallyl diphosphate (DMAPP). Acts in the terminal step of the DOXP/MEP pathway for isoprenoid precursor biosynthesis. This Chlamydia muridarum (strain MoPn / Nigg) protein is 4-hydroxy-3-methylbut-2-enyl diphosphate reductase.